Reading from the N-terminus, the 100-residue chain is Large ribosomal subunit protein uL23 (100 aa).

Belongs to the universal ribosomal protein uL23 family. Part of the 50S ribosomal subunit. Contacts protein L29, and trigger factor when it is bound to the ribosome.

Functionally, one of the early assembly proteins it binds 23S rRNA. One of the proteins that surrounds the polypeptide exit tunnel on the outside of the ribosome. Forms the main docking site for trigger factor binding to the ribosome. In Yersinia enterocolitica serotype O:8 / biotype 1B (strain NCTC 13174 / 8081), this protein is Large ribosomal subunit protein uL23.